The sequence spans 335 residues: DNA-directed RNA polymerase subunit alpha (335 aa).

The alpha N-terminal domain (alpha-NTD) stretch occupies residues 1-233; the sequence is MIRDKISVSI…DLFIPFLHGE (233 aa). The interval 264–335 is alpha C-terminal domain (alpha-CTD); it reads KEKIAFKHIF…KRFAIDPPRN (72 aa).

This sequence belongs to the RNA polymerase alpha chain family. In plastids the minimal PEP RNA polymerase catalytic core is composed of four subunits: alpha, beta, beta', and beta''. When a (nuclear-encoded) sigma factor is associated with the core the holoenzyme is formed, which can initiate transcription.

It is found in the plastid. It localises to the chloroplast. The catalysed reaction is RNA(n) + a ribonucleoside 5'-triphosphate = RNA(n+1) + diphosphate. DNA-dependent RNA polymerase catalyzes the transcription of DNA into RNA using the four ribonucleoside triphosphates as substrates. This chain is DNA-directed RNA polymerase subunit alpha, found in Pinus koraiensis (Korean pine).